Reading from the N-terminus, the 294-residue chain is Large ribosomal subunit protein uL18 (294 aa).

A disordered region spans residues 247–275 (RADPSPSAKKAAKPSKRHTAKRLTYDERK). Over residues 256–267 (KAAKPSKRHTAK) the composition is skewed to basic residues.

The protein belongs to the universal ribosomal protein uL18 family. As to quaternary structure, component of the large ribosomal subunit (LSU).

It localises to the cytoplasm. The protein resides in the nucleus. Component of the ribosome, a large ribonucleoprotein complex responsible for the synthesis of proteins in the cell. The small ribosomal subunit (SSU) binds messenger RNAs (mRNAs) and translates the encoded message by selecting cognate aminoacyl-transfer RNA (tRNA) molecules. The large subunit (LSU) contains the ribosomal catalytic site termed the peptidyl transferase center (PTC), which catalyzes the formation of peptide bonds, thereby polymerizing the amino acids delivered by tRNAs into a polypeptide chain. The nascent polypeptides leave the ribosome through a tunnel in the LSU and interact with protein factors that function in enzymatic processing, targeting, and the membrane insertion of nascent chains at the exit of the ribosomal tunnel. The polypeptide is Large ribosomal subunit protein uL18 (rpl-5) (Caenorhabditis briggsae).